Consider the following 273-residue polypeptide: Type III pantothenate kinase (273 aa).

5–12 (DVGNSHVV) provides a ligand contact to ATP. Substrate is bound at residue 112 to 115 (GTDL). Asp114 acts as the Proton acceptor in catalysis. Asp134 lines the K(+) pocket. Position 137 (Thr137) interacts with ATP. Substrate is bound at residue Thr189.

Belongs to the type III pantothenate kinase family. Homodimer. The cofactor is NH4(+). It depends on K(+) as a cofactor.

The protein resides in the cytoplasm. The catalysed reaction is (R)-pantothenate + ATP = (R)-4'-phosphopantothenate + ADP + H(+). It functions in the pathway cofactor biosynthesis; coenzyme A biosynthesis; CoA from (R)-pantothenate: step 1/5. In terms of biological role, catalyzes the phosphorylation of pantothenate (Pan), the first step in CoA biosynthesis. The polypeptide is Type III pantothenate kinase (Treponema pallidum (strain Nichols)).